Reading from the N-terminus, the 337-residue chain is Putative long-chain-alcohol O-fatty-acyltransferase 10 (337 aa).

A run of 8 helical transmembrane segments spans residues 7-27 (SFVK…YIPS), 38-58 (SVLP…FTIF), 59-79 (SSTT…LFAF), 82-102 (GPLL…CLPI), 142-162 (ILLL…LLTI), 228-248 (MGCM…YFYI), 254-274 (TLEV…EIAV), and 285-305 (MLLR…LFFG).

Belongs to the wax synthase family.

Its subcellular location is the membrane. It catalyses the reaction a long chain fatty alcohol + a fatty acyl-CoA = a wax ester + CoA. Its function is as follows. Catalyzes the final step in the synthesis of long-chain linear esters (waxes). The chain is Putative long-chain-alcohol O-fatty-acyltransferase 10 from Arabidopsis thaliana (Mouse-ear cress).